We begin with the raw amino-acid sequence, 270 residues long: CASP-like protein 4A1 (270 aa).

The tract at residues 1–110 (MEELEKTQKF…PSFSSSSSTP (110 aa)) is disordered. At 1-121 (MEELEKTQKF…ESKWASLIRK (121 aa)) the chain is on the cytoplasmic side. Polar residues predominate over residues 24 to 66 (SSPINFEMSSRSSLHSLPQTTIESPPDSPTLSSIPDSHGSSPH). Residues 85–97 (NGEEEKKVSESRR) are compositionally biased toward basic and acidic residues. Positions 100–110 (RPSFSSSSSTP) are enriched in low complexity. A helical membrane pass occupies residues 122 to 142 (ALLGFRVIAFVSCLVSFSVMV). Residues 143–161 (SDRDKGWAHDSFYNYKEFR) are Extracellular-facing. Residues 162-182 (FCLAANVIGFVYSGFMICDLV) traverse the membrane as a helical segment. The Cytoplasmic segment spans residues 183 to 198 (YLLSTSIRRSRHNLRH). A helical transmembrane segment spans residues 199–221 (FLEFGLDQMLAYLLASASTSASI). The Extracellular portion of the chain corresponds to 222–246 (RVDDWQSNWGADKFPDLARASVALS). Residues 247-267 (YVSFVAFAFCSLASGYALCAL) form a helical membrane-spanning segment. Over 268–270 (RSI) the chain is Cytoplasmic.

Belongs to the Casparian strip membrane proteins (CASP) family. Homodimer and heterodimers.

It localises to the cell membrane. This is CASP-like protein 4A1 from Arabidopsis thaliana (Mouse-ear cress).